Reading from the N-terminus, the 175-residue chain is ATP-dependent protease subunit HslV (175 aa).

The active site involves T2. The Na(+) site is built by A156, C159, and T162.

It belongs to the peptidase T1B family. HslV subfamily. A double ring-shaped homohexamer of HslV is capped on each side by a ring-shaped HslU homohexamer. The assembly of the HslU/HslV complex is dependent on binding of ATP.

It localises to the cytoplasm. The catalysed reaction is ATP-dependent cleavage of peptide bonds with broad specificity.. With respect to regulation, allosterically activated by HslU binding. Functionally, protease subunit of a proteasome-like degradation complex believed to be a general protein degrading machinery. The chain is ATP-dependent protease subunit HslV from Rhizobium johnstonii (strain DSM 114642 / LMG 32736 / 3841) (Rhizobium leguminosarum bv. viciae).